We begin with the raw amino-acid sequence, 428 residues long: Adenosylmethionine-8-amino-7-oxononanoate aminotransferase (428 aa).

Residue W52 participates in substrate binding. Pyridoxal 5'-phosphate is bound at residue G112 to S113. Y144 contributes to the substrate binding site. D245 provides a ligand contact to pyridoxal 5'-phosphate. The substrate site is built by K274 and G307. K274 is subject to N6-(pyridoxal phosphate)lysine. Position 308 to 309 (P308 to T309) interacts with pyridoxal 5'-phosphate. Position 391 (R391) interacts with substrate.

This sequence belongs to the class-III pyridoxal-phosphate-dependent aminotransferase family. BioA subfamily. In terms of assembly, homodimer. Pyridoxal 5'-phosphate serves as cofactor.

It is found in the cytoplasm. The catalysed reaction is (8S)-8-amino-7-oxononanoate + S-adenosyl-L-methionine = S-adenosyl-4-methylsulfanyl-2-oxobutanoate + (7R,8S)-7,8-diammoniononanoate. The protein operates within cofactor biosynthesis; biotin biosynthesis; 7,8-diaminononanoate from 8-amino-7-oxononanoate (SAM route): step 1/1. Catalyzes the transfer of the alpha-amino group from S-adenosyl-L-methionine (SAM) to 7-keto-8-aminopelargonic acid (KAPA) to form 7,8-diaminopelargonic acid (DAPA). It is the only aminotransferase known to utilize SAM as an amino donor. In Buchnera aphidicola subsp. Acyrthosiphon pisum (strain APS) (Acyrthosiphon pisum symbiotic bacterium), this protein is Adenosylmethionine-8-amino-7-oxononanoate aminotransferase.